The sequence spans 32 residues: Beta-amanitin proprotein (32 aa).

Residues 1-10 (MSDINATRLP) constitute a propeptide that is removed on maturation. A cross-link (cyclopeptide (Ile-Pro)) is located at residues 11 to 18 (IWGIGCDP). Positions 12-16 (WGIGC) form a cross-link, 2'-cysteinyl-6'-hydroxytryptophan sulfoxide (Trp-Cys). The propeptide occupies 19–32 (CIGDDVTILLTRGE).

This sequence belongs to the MSDIN fungal toxin family. Processed by the macrocyclase-peptidase enzyme POPB to yield a toxic cyclic decapeptide. POPB first removes 10 residues from the N-terminus. Conformational trapping of the remaining peptide forces the enzyme to release this intermediate rather than proceed to macrocyclization. The enzyme rebinds the remaining peptide in a different conformation and catalyzes macrocyclization of the N-terminal 8 residues.

Its function is as follows. Toxin belonging to the bicyclic octapeptides amatoxins that acts by binding non-competitively to RNA polymerase II and greatly slowing the elongation of transcripts from target promoters. The polypeptide is Beta-amanitin proprotein (Amanita phalloides (Death cap)).